The chain runs to 121 residues: Small ribosomal subunit protein uS13 (121 aa).

The interval 91–121 (HRRGLPVRGQKTKNNARTRKGPVKTVANKKK) is disordered.

The protein belongs to the universal ribosomal protein uS13 family. In terms of assembly, part of the 30S ribosomal subunit. Forms a loose heterodimer with protein S19. Forms two bridges to the 50S subunit in the 70S ribosome.

Located at the top of the head of the 30S subunit, it contacts several helices of the 16S rRNA. In the 70S ribosome it contacts the 23S rRNA (bridge B1a) and protein L5 of the 50S subunit (bridge B1b), connecting the 2 subunits; these bridges are implicated in subunit movement. Contacts the tRNAs in the A and P-sites. In Staphylococcus epidermidis (strain ATCC 35984 / DSM 28319 / BCRC 17069 / CCUG 31568 / BM 3577 / RP62A), this protein is Small ribosomal subunit protein uS13.